A 370-amino-acid chain; its full sequence is Seipin (370 aa).

The signal sequence occupies residues 1–18; the sequence is MNILLRLIVFALDPLGLG. The Cytoplasmic segment spans residues 19–55; the sequence is RRFLIRPAVNLGWNVYDRVRSKADEKVGTVRELVLRL. A helical membrane pass occupies residues 56–76; it reads GLIAFAVVLIIWLAVFMYAAF. The Lumenal segment spans residues 77 to 251; it reads YYVYMPAISH…GLRYIMFNWP (175 aa). The chain crosses the membrane as a helical span at residues 252–272; sequence VLSAIVAISTNLFFILVVFLL. The Cytoplasmic portion of the chain corresponds to 273-370; it reads SWYHWSDAKW…RPTKKTTADH (98 aa). The tract at residues 346 to 370 is disordered; that stretch reads KSRSGKRESPDALRKRPTKKTTADH. Residues 350–359 are compositionally biased toward basic and acidic residues; sequence GKRESPDALR.

As to expression, widely expressed, with highest levels detected in fat body, moderate levels detected in salivary gland, midgut and muscle, and weak expression detected in brain.

The protein localises to the endoplasmic reticulum membrane. Its subcellular location is the lipid droplet. Its function is as follows. Acts as a tissue-autonomous lipid modulator, preventing ectopic lipid accumulation in salivary gland (a non-adipose tissue) and in promoting lipid storage in fat tissue. Required for the growth and maturation of small nascent lipid droplets (LDs) into larger mature LDs. The chain is Seipin from Drosophila melanogaster (Fruit fly).